Reading from the N-terminus, the 467-residue chain is Nuclear distribution protein PAC1 (467 aa).

Residues 62-96 adopt a coiled-coil conformation; sequence GSIIRLQRAITKLEQKCDALQQELDDKTKQLETIV. WD repeat units follow at residues 121–160, 164–212, 219–262, 264–302, 325–365, 385–424, and 426–466; these read QNES…IPLA, AHSK…GELK, AHDS…QSFS, HSEW…SVGT, PYRD…LKPN, GHTS…KTWS, and IHNN…VKII.

Belongs to the WD repeat LIS1/nudF family. Self-associates. Interacts with NDL1 and dynein.

It localises to the cytoplasm. The protein resides in the cytoskeleton. Its subcellular location is the spindle pole. Positively regulates the activity of the minus-end directed microtubule motor protein dynein. Plays a central role in positioning the mitotic spindle at the bud neck during cell division. Targets cytoplasmic dynein to microtubule plus ends, thereby promoting dynein-mediated microtubule sliding along the bud cortex and consequently the movement of the mitotic spindle to the bud neck. This is Nuclear distribution protein PAC1 from Candida glabrata (strain ATCC 2001 / BCRC 20586 / JCM 3761 / NBRC 0622 / NRRL Y-65 / CBS 138) (Yeast).